Consider the following 67-residue polypeptide: Protein LITTLE ZIPPER 3 (67 aa).

Residues tyrosine 14–lysine 59 are a coiled coil. A disordered region spans residues glutamine 42–serine 67.

In terms of assembly, interacts with REV. Interacts with ATBH-8, ATBH-9, ATB-14 and ATB-15. Expressed in the adaxial epidermis of the cotyledons and leaves, and in the vascular cylinder of wild-type torpedo stage embryos. Confined in the central zone and the organizing center in the shoot apical meristem.

The protein resides in the nucleus. Competitive inhibitor of the HD-ZIPIII transcription factors in shoot apical meristem (SAM) development. Acts by forming non-functional heterodimers. Part of a negative feedback loop. Involved in SAM development and lateral organ patterning. Essential for proper functioning of stem cells in the SAM. The polypeptide is Protein LITTLE ZIPPER 3 (Arabidopsis thaliana (Mouse-ear cress)).